The sequence spans 308 residues: 4-hydroxy-3-methylbut-2-enyl diphosphate reductase 2 (308 aa).

Cys12 contacts [4Fe-4S] cluster. The (2E)-4-hydroxy-3-methylbut-2-enyl diphosphate site is built by His41 and His74. Dimethylallyl diphosphate is bound by residues His41 and His74. Isopentenyl diphosphate-binding residues include His41 and His74. Cys96 provides a ligand contact to [4Fe-4S] cluster. (2E)-4-hydroxy-3-methylbut-2-enyl diphosphate is bound at residue His124. Dimethylallyl diphosphate is bound at residue His124. His124 contacts isopentenyl diphosphate. Residue Glu126 is the Proton donor of the active site. (2E)-4-hydroxy-3-methylbut-2-enyl diphosphate is bound at residue Thr164. Cys194 serves as a coordination point for [4Fe-4S] cluster. (2E)-4-hydroxy-3-methylbut-2-enyl diphosphate-binding residues include Ser222, Ser223, Asn224, and Ser266. Residues Ser222, Ser223, Asn224, and Ser266 each coordinate dimethylallyl diphosphate. Isopentenyl diphosphate-binding residues include Ser222, Ser223, Asn224, and Ser266.

The protein belongs to the IspH family. [4Fe-4S] cluster is required as a cofactor.

The enzyme catalyses isopentenyl diphosphate + 2 oxidized [2Fe-2S]-[ferredoxin] + H2O = (2E)-4-hydroxy-3-methylbut-2-enyl diphosphate + 2 reduced [2Fe-2S]-[ferredoxin] + 2 H(+). It carries out the reaction dimethylallyl diphosphate + 2 oxidized [2Fe-2S]-[ferredoxin] + H2O = (2E)-4-hydroxy-3-methylbut-2-enyl diphosphate + 2 reduced [2Fe-2S]-[ferredoxin] + 2 H(+). Its pathway is isoprenoid biosynthesis; dimethylallyl diphosphate biosynthesis; dimethylallyl diphosphate from (2E)-4-hydroxy-3-methylbutenyl diphosphate: step 1/1. The protein operates within isoprenoid biosynthesis; isopentenyl diphosphate biosynthesis via DXP pathway; isopentenyl diphosphate from 1-deoxy-D-xylulose 5-phosphate: step 6/6. Its function is as follows. Catalyzes the conversion of 1-hydroxy-2-methyl-2-(E)-butenyl 4-diphosphate (HMBPP) into a mixture of isopentenyl diphosphate (IPP) and dimethylallyl diphosphate (DMAPP). Acts in the terminal step of the DOXP/MEP pathway for isoprenoid precursor biosynthesis. This chain is 4-hydroxy-3-methylbut-2-enyl diphosphate reductase 2, found in Bradyrhizobium diazoefficiens (strain JCM 10833 / BCRC 13528 / IAM 13628 / NBRC 14792 / USDA 110).